Reading from the N-terminus, the 360-residue chain is 3-dehydroquinate synthase (360 aa).

NAD(+) contacts are provided by residues 71–76 (DGEQYK), 105–109 (GVIGD), 129–130 (TT), Lys142, Lys151, and 169–172 (CLDT). Glu184, His247, and His264 together coordinate Zn(2+).

Belongs to the sugar phosphate cyclases superfamily. Dehydroquinate synthase family. Co(2+) serves as cofactor. Zn(2+) is required as a cofactor. Requires NAD(+) as cofactor.

It is found in the cytoplasm. It catalyses the reaction 7-phospho-2-dehydro-3-deoxy-D-arabino-heptonate = 3-dehydroquinate + phosphate. The protein operates within metabolic intermediate biosynthesis; chorismate biosynthesis; chorismate from D-erythrose 4-phosphate and phosphoenolpyruvate: step 2/7. Catalyzes the conversion of 3-deoxy-D-arabino-heptulosonate 7-phosphate (DAHP) to dehydroquinate (DHQ). The protein is 3-dehydroquinate synthase of Erwinia tasmaniensis (strain DSM 17950 / CFBP 7177 / CIP 109463 / NCPPB 4357 / Et1/99).